The chain runs to 266 residues: 5'-nucleotidase SurE (266 aa).

Residues Asp8, Asp9, Ser39, and Asn93 each coordinate a divalent metal cation.

Belongs to the SurE nucleotidase family. It depends on a divalent metal cation as a cofactor.

The protein resides in the cytoplasm. It carries out the reaction a ribonucleoside 5'-phosphate + H2O = a ribonucleoside + phosphate. In terms of biological role, nucleotidase that shows phosphatase activity on nucleoside 5'-monophosphates. This chain is 5'-nucleotidase SurE, found in Pyrobaculum arsenaticum (strain DSM 13514 / JCM 11321 / PZ6).